Consider the following 529-residue polypeptide: Bifunctional purine biosynthesis protein PurH (529 aa).

Residues 1 to 148 enclose the MGS-like domain; the sequence is MQQRRPIRRA…KNHKDVAIVV (148 aa).

It belongs to the PurH family.

It carries out the reaction (6R)-10-formyltetrahydrofolate + 5-amino-1-(5-phospho-beta-D-ribosyl)imidazole-4-carboxamide = 5-formamido-1-(5-phospho-D-ribosyl)imidazole-4-carboxamide + (6S)-5,6,7,8-tetrahydrofolate. It catalyses the reaction IMP + H2O = 5-formamido-1-(5-phospho-D-ribosyl)imidazole-4-carboxamide. It functions in the pathway purine metabolism; IMP biosynthesis via de novo pathway; 5-formamido-1-(5-phospho-D-ribosyl)imidazole-4-carboxamide from 5-amino-1-(5-phospho-D-ribosyl)imidazole-4-carboxamide (10-formyl THF route): step 1/1. The protein operates within purine metabolism; IMP biosynthesis via de novo pathway; IMP from 5-formamido-1-(5-phospho-D-ribosyl)imidazole-4-carboxamide: step 1/1. The protein is Bifunctional purine biosynthesis protein PurH of Pectobacterium atrosepticum (strain SCRI 1043 / ATCC BAA-672) (Erwinia carotovora subsp. atroseptica).